Reading from the N-terminus, the 152-residue chain is Interleukin-1 family member 10 (152 aa).

The protein belongs to the IL-1 family. Interacts with cargo receptor TMED10; the interaction mediates the translocation from the cytoplasm into the ERGIC (endoplasmic reticulum-Golgi intermediate compartment) and thereby secretion.

Its subcellular location is the cytoplasm. It localises to the endoplasmic reticulum-Golgi intermediate compartment. It is found in the secreted. Cytokine with immunomodulatory activity. Alone, does not induce cytokine production, but reduces IL22 and IL17A production by T-cells in response to heat-killed Candida albicans. Reduces IL36G-induced production of IL8 by peripheral blood mononuclear cells. Increases IL6 production by dendritic cells stimulated by bacterial lipopolysaccharides (LPS). Ligand for IL-36R/IL1RL2. The sequence is that of Interleukin-1 family member 10 (Il1f10) from Mus musculus (Mouse).